Reading from the N-terminus, the 418-residue chain is Serine hydroxymethyltransferase (418 aa).

Residues Leu121 and 125–127 (GHL) contribute to the (6S)-5,6,7,8-tetrahydrofolate site. N6-(pyridoxal phosphate)lysine is present on Lys230. 356-358 (SPF) contributes to the (6S)-5,6,7,8-tetrahydrofolate binding site.

It belongs to the SHMT family. In terms of assembly, homodimer. It depends on pyridoxal 5'-phosphate as a cofactor.

It is found in the cytoplasm. The catalysed reaction is (6R)-5,10-methylene-5,6,7,8-tetrahydrofolate + glycine + H2O = (6S)-5,6,7,8-tetrahydrofolate + L-serine. It functions in the pathway one-carbon metabolism; tetrahydrofolate interconversion. Its pathway is amino-acid biosynthesis; glycine biosynthesis; glycine from L-serine: step 1/1. Catalyzes the reversible interconversion of serine and glycine with tetrahydrofolate (THF) serving as the one-carbon carrier. This reaction serves as the major source of one-carbon groups required for the biosynthesis of purines, thymidylate, methionine, and other important biomolecules. Also exhibits THF-independent aldolase activity toward beta-hydroxyamino acids, producing glycine and aldehydes, via a retro-aldol mechanism. This Pseudoalteromonas atlantica (strain T6c / ATCC BAA-1087) protein is Serine hydroxymethyltransferase.